A 530-amino-acid chain; its full sequence is Probable ATP-binding protein YbiT (530 aa).

ABC transporter domains follow at residues 2-252 (LVSS…ERLL) and 320-526 (LEVE…YLRS). Residues 34-41 (GANGSGKS) and 352-359 (GTNGVGKS) each bind ATP.

It belongs to the ABC transporter superfamily. ABCF family. YbiT subfamily.

This is Probable ATP-binding protein YbiT (ybiT) from Escherichia coli O157:H7.